The primary structure comprises 143 residues: Small ribosomal subunit protein uS12 (143 aa).

Over residues 1–15 the composition is skewed to basic residues; sequence MGKCRGLRTARKLRD. A disordered region spans residues 1 to 27; sequence MGKCRGLRTARKLRDHRREQKWHDKQY. Over residues 16 to 27 the composition is skewed to basic and acidic residues; it reads HRREQKWHDKQY.

The protein belongs to the universal ribosomal protein uS12 family. Component of the 40S small ribosomal subunit.

Its subcellular location is the cytoplasm. It localises to the cytosol. The protein resides in the rough endoplasmic reticulum. This Ictalurus punctatus (Channel catfish) protein is Small ribosomal subunit protein uS12 (rps23).